A 247-amino-acid polypeptide reads, in one-letter code: 5'-nucleotidase SurE (247 aa).

The a divalent metal cation site is built by D8, D9, S39, and N91.

The protein belongs to the SurE nucleotidase family. The cofactor is a divalent metal cation.

It localises to the cytoplasm. It carries out the reaction a ribonucleoside 5'-phosphate + H2O = a ribonucleoside + phosphate. Its function is as follows. Nucleotidase that shows phosphatase activity on nucleoside 5'-monophosphates. This Pelobacter propionicus (strain DSM 2379 / NBRC 103807 / OttBd1) protein is 5'-nucleotidase SurE.